A 238-amino-acid chain; its full sequence is Oxidoreductase dmxR7 (238 aa).

Belongs to the avfA family.

The protein operates within secondary metabolite biosynthesis. Its function is as follows. Oxidoreductase; part of the gene cluster that mediates the biosynthesis of the dimeric xanthones cryptosporioptides. The pathway begins with the synthesis of atrochrysone thioester by the polyketide synthase dmx-nrPKS. The atrochrysone carboxyl ACP thioesterase dmxR1 then breaks the thioester bond and releases the atrochrysone carboxylic acid from dmx-nrPKS. Atrochrysone carboxylic acid is decarboxylated by the decarboxylase dmxR15, and oxidized by the anthrone oxygenase dmxR16 to yield emodin. Emodin is then reduced to emodin hydroquinone by the oxidoreductase dmxR7. A-ring reduction by the short chain dehydrogenase dmxR18, dehydration by the scytalone dehydratase-like protein dmxR17 and probable spontaneous re-oxidation, results in overall deoxygenation to chrysophanol. Baeyer-Villiger oxidation by the Baeyer-Villiger monooxygenase (BVMO) dmxR6 then yields monodictylactone in equilibrium with monodictyphenone. In the case of the cryptosporioptides biosynthesis, monodictylactone is reduced at C-12 to an alcohol (by the short chain dehydrogenases dmxR12 or dmxR8) and hydroxylated at C-5 by dmxR9, yielding the electron-rich aromatic which could eliminate H(2)O to form the ortho-quinonemethide, followed by tautomerisation to paraquinone and complete the formal reduction to produce the 10-methylgroup. Conjugate addition of C-4a-OH to the resulting paraquinone by the monooxygenase dmxR10 then gives cyclohexadienone, which is then reduced at C-5 by the short chain dehydrogenase dmxR3 to give the dihydroxanthone. The 6,7-epoxide in the cryptosporioptides could be introduced by the cytochrome P450 monooxygenase dmxL3. The highly reducing PKS dmxL2 manufactures butyrate, which is further carboxylated by dmxL1 to form ethylmalonate. It is not yet clear whether the carboxylation occurs while the butyrate is attached to the ACP of dmxL2, but this unusual fungal metabolite could then be esterified to O-5 by the O-acetyltransferase dmxR13. Finally, dimerization performed by dmxR5 gives the observed dimers cryptosporioptides A, B and C as the final products of the pathway. This is Oxidoreductase dmxR7 from Cryptosporiopsis sp. (strain 8999).